A 455-amino-acid polypeptide reads, in one-letter code: MAADEEPDSPSGALQTAAEEEETKTFKDLGVTDVLCEACDQLGWAKPTKIQIEAIPLALQGRDIIGLAETGSGKTGAFALPILNALLETPQRLFALVLTPTRELAFQISEQFEALGSSIGVQCAVIVGGIDSMSQSLALAKKPHIVIATPGRLIDHLENTKGFNLRALKYLVMDEADRILNMDFETEVDKILKVIPRDRKTFLFSATMTKKVQKLQRAALKNPVKCAVSSKYQTVEKLQQYYLFIPSKFKDTYLVYILNELAGNSFMIFCSTCNNTQRTALLLRNLGFTAIPLHGQMSQSKRLGSLNKFKAKARSILLATDVASRGLDIPHVDVVVNFDIPTHSKDYIHRVGRTARAGRSGKAITFVTQYDVELFQRIEHLIGKKLPVFPTQDEEVMMLTERVNEAQRFARMELREHGEKKKRKREDAGDDDDKEGAIGVRNKVAGGKMKKRKGR.

The disordered stretch occupies residues 1–21 (MAADEEPDSPSGALQTAAEEE). Residue Ala-2 is modified to N-acetylalanine. Ser-9 bears the Phosphoserine mark. The short motif at 24 to 52 (KTFKDLGVTDVLCEACDQLGWAKPTKIQI) is the Q motif element. The Helicase ATP-binding domain maps to 55-226 (IPLALQGRDI…RAALKNPVKC (172 aa)). 68-75 (AETGSGKT) is a binding site for ATP. Residue Thr-149 is modified to Phosphothreonine. Positions 174 to 177 (DEAD) match the DEAD box motif. Residues 237–397 (KLQQYYLFIP…VFPTQDEEVM (161 aa)) enclose the Helicase C-terminal domain. Residues 412 to 455 (MELREHGEKKKRKREDAGDDDDKEGAIGVRNKVAGGKMKKRKGR) are disordered.

Belongs to the DEAD box helicase family. DDX47/RRP3 subfamily. As to quaternary structure, interacts with AGO1 and AGO2. Interacts with GABARAP. Interacts with NOL8; the interaction is RNA-dependent.

It is found in the nucleus. The protein resides in the nucleolus. It carries out the reaction ATP + H2O = ADP + phosphate + H(+). Involved in apoptosis. May have a role in rRNA processing and mRNA splicing. Associates with pre-rRNA precursors. In Mus musculus (Mouse), this protein is Probable ATP-dependent RNA helicase DDX47 (Ddx47).